A 344-amino-acid polypeptide reads, in one-letter code: Dihydroorotase (344 aa).

Residues His14 and His16 each coordinate Zn(2+). Residues 16–18 (HVR) and Asn42 each bind substrate. Lys99, His136, and His174 together coordinate Zn(2+). Lys99 is modified (N6-carboxylysine). Residue His136 participates in substrate binding. Leu219 is a binding site for substrate. Asp247 serves as a coordination point for Zn(2+). The active site involves Asp247. Substrate contacts are provided by His251 and Ala263.

It belongs to the metallo-dependent hydrolases superfamily. DHOase family. Class II DHOase subfamily. In terms of assembly, homodimer. Zn(2+) is required as a cofactor.

The enzyme catalyses (S)-dihydroorotate + H2O = N-carbamoyl-L-aspartate + H(+). It functions in the pathway pyrimidine metabolism; UMP biosynthesis via de novo pathway; (S)-dihydroorotate from bicarbonate: step 3/3. Functionally, catalyzes the reversible cyclization of carbamoyl aspartate to dihydroorotate. The sequence is that of Dihydroorotase from Leptothrix cholodnii (strain ATCC 51168 / LMG 8142 / SP-6) (Leptothrix discophora (strain SP-6)).